The chain runs to 510 residues: Acyl-CoA desaturase 1 (510 aa).

Residues 1-112 lie on the Cytoplasmic side of the membrane; the sequence is MPTSGTTIEL…TLNNWHQHLN (112 aa). A helical membrane pass occupies residues 113–133; sequence WLNMVLVCGMPMIGWYFALSG. Topologically, residues 134 to 138 are lumenal; sequence KVPLH. A helical transmembrane segment spans residues 139-159; it reads LNVFLFSVFYYAVGGVSITAG. At 160–255 the chain is on the cytoplasmic side; the sequence is YHRLWSHRSY…DWTIRFQHRH (96 aa). Fe cation is bound by residues histidine 161, histidine 166, histidine 198, histidine 201, and histidine 202. The Histidine box-1 motif lies at 161-166; sequence HRLWSH. The Histidine box-2 signature appears at 198–202; the sequence is HRIHH. Residues 256–276 traverse the membrane as a helical segment; sequence YILLMLLTAFVIPTLICGYFF. Residues 277–280 lie on the Lumenal side of the membrane; sequence NDYM. The helical transmembrane segment at 281-301 threads the bilayer; the sequence is GGLIYAGFIRVFVIQQATFCI. Topologically, residues 302 to 510 are cytoplasmic; it reads NSLAHYIGTQ…GEIYETGKFF (209 aa). Residues histidine 306, histidine 335, histidine 338, and histidine 339 each contribute to the Fe cation site. The short motif at 335-339 is the Histidine box-3 element; the sequence is HNFHH. The 79-residue stretch at 409-487 folds into the Cytochrome b5 heme-binding domain; the sequence is LPMWDKQTFL…LADMRVAVIK (79 aa). 2 residues coordinate heme: histidine 444 and histidine 470.

It belongs to the fatty acid desaturase type 1 family. It depends on Fe(2+) as a cofactor.

It localises to the endoplasmic reticulum membrane. The enzyme catalyses octadecanoyl-CoA + 2 Fe(II)-[cytochrome b5] + O2 + 2 H(+) = (9Z)-octadecenoyl-CoA + 2 Fe(III)-[cytochrome b5] + 2 H2O. The catalysed reaction is hexadecanoyl-CoA + 2 Fe(II)-[cytochrome b5] + O2 + 2 H(+) = (9Z)-hexadecenoyl-CoA + 2 Fe(III)-[cytochrome b5] + 2 H2O. Its function is as follows. Stearoyl-CoA desaturase that utilizes O(2) and electrons from reduced cytochrome b5 to introduce the first double bond into saturated fatty acyl-CoA substrates. Catalyzes the insertion of a cis double bond at the delta-9 position into fatty acyl-CoA substrates including palmitoyl-CoA and stearoyl-CoA. Required for the biosynthesis of membrane phospholipids, cholesterol esters and triglycerides. Regulates fatty acid desaturation, that is, the ratio of unsaturated versus saturated fatty acyl chains, by competing with the acyltransferase STC1 for the common substrate C16:0-CoA. SCT1 sequesters C16:0-CoA into lipids, thereby shielding it from desaturation by OLE1. This is Acyl-CoA desaturase 1 (OLE1) from Saccharomyces cerevisiae (strain ATCC 204508 / S288c) (Baker's yeast).